The sequence spans 378 residues: Rhodopsin (378 aa).

Residues 1–53 (MMSIASGPSHAAYTWTAQGGGFGNQTVVDKVPPEMLHLVDAHWYQFPPMNPLW) lie on the Extracellular side of the membrane. N-linked (GlcNAc...) asparagine glycosylation is present at N24. A helical transmembrane segment spans residues 54–78 (HAILGFVIGILGMISVIGNGMVIYI). At 79 to 90 (FTTTKSLRTPSN) the chain is on the cytoplasmic side. The helical transmembrane segment at 91–115 (LLVINLAISDFLMMLSMSPAMVINC) threads the bilayer. At 116-130 (YYETWVLGPLVCELY) the chain is on the extracellular side. C127 and C204 are disulfide-bonded. Residues 131–150 (GLTGSLFGCGSIWTMTMIAF) form a helical membrane-spanning segment. Residues 151–169 (DRYNVIVKGLSAKPMTING) lie on the Cytoplasmic side of the membrane. The helical transmembrane segment at 170-193 (ALLRILGIWFFSLGWTIAPMFGWN) threads the bilayer. Residues 194-217 (RYVPEGNMTACGTDYLTKDLLSRS) lie on the Extracellular side of the membrane. An N-linked (GlcNAc...) asparagine glycan is attached at N200. A helical membrane pass occupies residues 218-245 (YILVYSFFCYFLPLFLIIYSYFFIIQAV). At 246–280 (AAHEKNMREQAKKMNVASLRSAENQSTSAECKLAK) the chain is on the cytoplasmic side. The chain crosses the membrane as a helical span at residues 281–304 (VALMTISLWFMAWTPYLVINYAGI). At 305–311 (FETVKIN) the chain is on the extracellular side. A helical membrane pass occupies residues 312–336 (PLFTIWGSLFAKANAVYNPIVYGIS). At K323 the chain carries N6-(retinylidene)lysine. Residues 337–378 (HPKYRAALFQRFPSLACSSGPAGADTLSTTTTVTEGTEKPAA) lie on the Cytoplasmic side of the membrane. The segment at 356–378 (GPAGADTLSTTTTVTEGTEKPAA) is disordered. A compositionally biased stretch (low complexity) spans 362–371 (TLSTTTTVTE).

This sequence belongs to the G-protein coupled receptor 1 family. Opsin subfamily. Post-translationally, phosphorylated on some or all of the serine and threonine residues present in the C-terminal region.

Its subcellular location is the membrane. Its function is as follows. Visual pigments are the light-absorbing molecules that mediate vision. They consist of an apoprotein, opsin, covalently linked to cis-retinal. This is Rhodopsin from Cataglyphis bombycina (Saharan silver ant).